Reading from the N-terminus, the 430-residue chain is Adenylosuccinate synthetase (430 aa).

GTP contacts are provided by residues 12 to 18 (GDEGKGK) and 40 to 42 (GHT). The active-site Proton acceptor is D13. The Mg(2+) site is built by D13 and G40. IMP contacts are provided by residues 13–16 (DEGK), 38–41 (NAGH), T128, R142, Q223, T238, and R302. H41 serves as the catalytic Proton donor. 298–304 (TTTGRPR) provides a ligand contact to substrate. GTP is bound by residues R304, 330 to 332 (SID), and 412 to 414 (SVG).

The protein belongs to the adenylosuccinate synthetase family. As to quaternary structure, homodimer. It depends on Mg(2+) as a cofactor.

The protein resides in the cytoplasm. It carries out the reaction IMP + L-aspartate + GTP = N(6)-(1,2-dicarboxyethyl)-AMP + GDP + phosphate + 2 H(+). It functions in the pathway purine metabolism; AMP biosynthesis via de novo pathway; AMP from IMP: step 1/2. Functionally, plays an important role in the de novo pathway of purine nucleotide biosynthesis. Catalyzes the first committed step in the biosynthesis of AMP from IMP. This chain is Adenylosuccinate synthetase, found in Streptococcus agalactiae serotype III (strain NEM316).